We begin with the raw amino-acid sequence, 229 residues long: Enolase-phosphatase E1 (229 aa).

It belongs to the HAD-like hydrolase superfamily. MasA/MtnC family. As to quaternary structure, monomer. The cofactor is Mg(2+).

It carries out the reaction 5-methylsulfanyl-2,3-dioxopentyl phosphate + H2O = 1,2-dihydroxy-5-(methylsulfanyl)pent-1-en-3-one + phosphate. It participates in amino-acid biosynthesis; L-methionine biosynthesis via salvage pathway; L-methionine from S-methyl-5-thio-alpha-D-ribose 1-phosphate: step 3/6. It functions in the pathway amino-acid biosynthesis; L-methionine biosynthesis via salvage pathway; L-methionine from S-methyl-5-thio-alpha-D-ribose 1-phosphate: step 4/6. In terms of biological role, bifunctional enzyme that catalyzes the enolization of 2,3-diketo-5-methylthiopentyl-1-phosphate (DK-MTP-1-P) into the intermediate 2-hydroxy-3-keto-5-methylthiopentenyl-1-phosphate (HK-MTPenyl-1-P), which is then dephosphorylated to form the acireductone 1,2-dihydroxy-3-keto-5-methylthiopentene (DHK-MTPene). This is Enolase-phosphatase E1 from Yersinia enterocolitica serotype O:8 / biotype 1B (strain NCTC 13174 / 8081).